A 62-amino-acid polypeptide reads, in one-letter code: Small ribosomal subunit protein eS17 (62 aa).

Belongs to the eukaryotic ribosomal protein eS17 family.

The protein is Small ribosomal subunit protein eS17 of Methanoculleus marisnigri (strain ATCC 35101 / DSM 1498 / JR1).